Reading from the N-terminus, the 744-residue chain is Catalase-peroxidase 3 (744 aa).

The tryptophyl-tyrosyl-methioninium (Trp-Tyr) (with M-254) cross-link spans 106–228; it reads WHFAGTYRIG…LAASEMGLIY (123 aa). The active-site Proton acceptor is His107. The segment at residues 228–254 is a cross-link (tryptophyl-tyrosyl-methioninium (Tyr-Met) (with W-106)); that stretch reads YVDPQGPATLPDPLASARDIRETFRRM. His269 contacts heme b.

It belongs to the peroxidase family. Peroxidase/catalase subfamily. As to quaternary structure, homodimer or homotetramer. The cofactor is heme b. Formation of the three residue Trp-Tyr-Met cross-link is important for the catalase, but not the peroxidase activity of the enzyme.

The enzyme catalyses H2O2 + AH2 = A + 2 H2O. The catalysed reaction is 2 H2O2 = O2 + 2 H2O. Functionally, bifunctional enzyme with both catalase and broad-spectrum peroxidase activity. This Mycolicibacterium smegmatis (strain ATCC 700084 / mc(2)155) (Mycobacterium smegmatis) protein is Catalase-peroxidase 3.